The following is a 111-amino-acid chain: Ribonuclease P protein component 1 (111 aa).

It belongs to the eukaryotic/archaeal RNase P protein component 1 family. As to quaternary structure, consists of a catalytic RNA component and at least 4-5 protein subunits.

Its subcellular location is the cytoplasm. It catalyses the reaction Endonucleolytic cleavage of RNA, removing 5'-extranucleotides from tRNA precursor.. In terms of biological role, part of ribonuclease P, a protein complex that generates mature tRNA molecules by cleaving their 5'-ends. The protein is Ribonuclease P protein component 1 of Hyperthermus butylicus (strain DSM 5456 / JCM 9403 / PLM1-5).